A 363-amino-acid polypeptide reads, in one-letter code: Protein arginine N-methyltransferase 2 (363 aa).

ANK repeat units follow at residues 22–46 (AAQTAAPSVLADLLAEGAPAWFQDD) and 48–80 (LGWSCLHYAAERKEPECLEVLLQGGAVWNAVDK). Residues 111–363 (KTSAGDNLVF…RLPIAKMSLI (253 aa)) enclose the RMT2 domain. Residues Phe-120, 186-191 (FGLGIV), 209-211 (EAH), 236-237 (WQ), and Asp-265 contribute to the S-adenosyl-L-methionine site.

Belongs to the class I-like SAM-binding methyltransferase superfamily. RMT2 methyltransferase family. As to quaternary structure, monomer.

The protein localises to the cytoplasm. It is found in the nucleus. S-adenosyl-L-methionine-dependent protein-arginine N-methyltransferase that methylates the delta-nitrogen atom of arginine residues to form N5-methylarginine (type IV) in target proteins. Monomethylates ribosomal protein L12. The sequence is that of Protein arginine N-methyltransferase 2 from Cryptococcus neoformans var. neoformans serotype D (strain B-3501A) (Filobasidiella neoformans).